Here is a 106-residue protein sequence, read N- to C-terminus: Pyrimidine/purine nucleoside phosphorylase (106 aa).

This sequence belongs to the nucleoside phosphorylase PpnP family.

It catalyses the reaction a purine D-ribonucleoside + phosphate = a purine nucleobase + alpha-D-ribose 1-phosphate. The catalysed reaction is adenosine + phosphate = alpha-D-ribose 1-phosphate + adenine. The enzyme catalyses cytidine + phosphate = cytosine + alpha-D-ribose 1-phosphate. It carries out the reaction guanosine + phosphate = alpha-D-ribose 1-phosphate + guanine. It catalyses the reaction inosine + phosphate = alpha-D-ribose 1-phosphate + hypoxanthine. The catalysed reaction is thymidine + phosphate = 2-deoxy-alpha-D-ribose 1-phosphate + thymine. The enzyme catalyses uridine + phosphate = alpha-D-ribose 1-phosphate + uracil. It carries out the reaction xanthosine + phosphate = alpha-D-ribose 1-phosphate + xanthine. In terms of biological role, catalyzes the phosphorolysis of diverse nucleosides, yielding D-ribose 1-phosphate and the respective free bases. Can use uridine, adenosine, guanosine, cytidine, thymidine, inosine and xanthosine as substrates. Also catalyzes the reverse reactions. This Paraburkholderia xenovorans (strain LB400) protein is Pyrimidine/purine nucleoside phosphorylase.